The following is a 504-amino-acid chain: Cytochrome P450 6B2 (504 aa).

Heme is bound at residue Cys445.

This sequence belongs to the cytochrome P450 family. The cofactor is heme.

Its subcellular location is the endoplasmic reticulum membrane. It localises to the microsome membrane. It carries out the reaction an organic molecule + reduced [NADPH--hemoprotein reductase] + O2 = an alcohol + oxidized [NADPH--hemoprotein reductase] + H2O + H(+). This is Cytochrome P450 6B2 (CYP6B2) from Helicoverpa armigera (Cotton bollworm).